A 136-amino-acid polypeptide reads, in one-letter code: MTGSDISHILKEGELEKRSDNLLQFWKRKTCVLTTDSLNIYTDQQKKNKSKELKLQSIKKVDCVEHTGKFVYFTIVTTDNKEIDFRCSDEKNCWNAVIAIALVNFQNRKAIQGFKTQKESENTSLGQQERCMARAP.

Residues 9–103 form the PH domain; sequence ILKEGELEKR…WNAVIAIALV (95 aa).

Belongs to the PHLDA2 family.

The protein resides in the cytoplasm. The protein localises to the membrane. Functionally, plays a role in regulating placenta growth. May act via its PH domain that competes with other PH domain-containing proteins, thereby preventing their binding to membrane lipids. The polypeptide is Pleckstrin homology-like domain family A member 2 (phlda2) (Danio rerio (Zebrafish)).